A 103-amino-acid chain; its full sequence is Large ribosomal subunit protein uL23 (103 aa).

This sequence belongs to the universal ribosomal protein uL23 family. Part of the 50S ribosomal subunit. Contacts protein L29, and trigger factor when it is bound to the ribosome.

Its function is as follows. One of the early assembly proteins it binds 23S rRNA. One of the proteins that surrounds the polypeptide exit tunnel on the outside of the ribosome. Forms the main docking site for trigger factor binding to the ribosome. The polypeptide is Large ribosomal subunit protein uL23 (Chlorobium chlorochromatii (strain CaD3)).